A 642-amino-acid chain; its full sequence is Poly(A) polymerase beta (642 aa).

Residues 101 to 103 (FGS), Thr-110, 114 to 116 (DID), Asp-168, Lys-229, Tyr-238, and 247 to 248 (GV) contribute to the ATP site. 3 residues coordinate Mg(2+): Asp-114, Asp-116, and Asp-168. Disordered regions lie at residues 530–553 (SENS…GNPQ) and 620–642 (LVNH…ILGV). The span at 620 to 636 (LVNHPSRPSGNTATNIP) shows a compositional bias: polar residues.

Belongs to the poly(A) polymerase family. Interacts with GSG1. Mg(2+) is required as a cofactor. Mn(2+) serves as cofactor. In terms of tissue distribution, testis specific.

Its subcellular location is the cytoplasm. The protein resides in the nucleus. The enzyme catalyses RNA(n) + ATP = RNA(n)-3'-adenine ribonucleotide + diphosphate. This is Poly(A) polymerase beta from Mus musculus (Mouse).